A 185-amino-acid chain; its full sequence is UPF0397 protein LJ_1703 (185 aa).

The next 5 helical transmembrane spans lie at 6 to 26 (GLSV…VILA), 46 to 66 (FLAL…GFIG), 78 to 98 (TWWS…LYGM), 113 to 133 (IGFN…IAPV), and 147 to 167 (FLQG…LGTI).

It belongs to the UPF0397 family.

It localises to the cell membrane. In Lactobacillus johnsonii (strain CNCM I-12250 / La1 / NCC 533), this protein is UPF0397 protein LJ_1703.